A 31-amino-acid chain; its full sequence is U13-ctenitoxin-Pn1b (31 aa).

Disulfide bonds link Cys3-Cys17, Cys10-Cys21, and Cys16-Cys30.

In terms of tissue distribution, expressed by the venom gland.

Its subcellular location is the secreted. Functionally, acts as a neurotoxin. The chain is U13-ctenitoxin-Pn1b from Phoneutria nigriventer (Brazilian armed spider).